We begin with the raw amino-acid sequence, 459 residues long: tRNA modification GTPase MnmE (459 aa).

The (6S)-5-formyl-5,6,7,8-tetrahydrofolate site is built by arginine 25, glutamate 87, and arginine 126. One can recognise a TrmE-type G domain in the interval glycine 221 to glutamine 380. Asparagine 231 contacts K(+). Residues asparagine 231–serine 236, threonine 250–threonine 256, and aspartate 275–glycine 278 contribute to the GTP site. Serine 235 contacts Mg(2+). The K(+) site is built by threonine 250, leucine 252, and threonine 255. Threonine 256 is a binding site for Mg(2+). Lysine 459 serves as a coordination point for (6S)-5-formyl-5,6,7,8-tetrahydrofolate.

This sequence belongs to the TRAFAC class TrmE-Era-EngA-EngB-Septin-like GTPase superfamily. TrmE GTPase family. In terms of assembly, homodimer. Heterotetramer of two MnmE and two MnmG subunits. The cofactor is K(+).

It localises to the cytoplasm. Exhibits a very high intrinsic GTPase hydrolysis rate. Involved in the addition of a carboxymethylaminomethyl (cmnm) group at the wobble position (U34) of certain tRNAs, forming tRNA-cmnm(5)s(2)U34. The polypeptide is tRNA modification GTPase MnmE (Nostoc sp. (strain PCC 7120 / SAG 25.82 / UTEX 2576)).